The chain runs to 844 residues: Aminopeptidase N (844 aa).

Residues Glu120 and 253-257 (GAMEN) each bind substrate. Residue His289 participates in Zn(2+) binding. Glu290 (proton acceptor) is an active-site residue. His293 and Glu312 together coordinate Zn(2+).

This sequence belongs to the peptidase M1 family. In terms of assembly, monomer. It depends on Zn(2+) as a cofactor.

The protein localises to the cytoplasm. It catalyses the reaction Release of an N-terminal amino acid, Xaa-|-Yaa- from a peptide, amide or arylamide. Xaa is preferably Ala, but may be most amino acids including Pro (slow action). When a terminal hydrophobic residue is followed by a prolyl residue, the two may be released as an intact Xaa-Pro dipeptide.. In terms of biological role, aminopeptidase N is involved in the degradation of intracellular peptides generated by protein breakdown during normal growth as well as in response to nutrient starvation. This chain is Aminopeptidase N (pepN), found in Lactobacillus helveticus (Lactobacillus suntoryeus).